The chain runs to 135 residues: Allatotropins (135 aa).

Residues M1–A22 form the signal peptide. At F51 the chain carries Phenylalanine amide. Positions D55 to A135 are excised as a propeptide.

In terms of tissue distribution, allatotropin: Expressed in corpora cardiaca (CC), corpora allata (CA), antennal lobe (AL) and gnathal ganglion (GNG) (protein level). Expression in AL detected in all animals, expression in GNG detected in most animals and expression in CA and CC detected in few animals (at protein level). Allatotropin-PP-1: Expressed in corpora cardiaca (CC), corpora allata (CA), antennal lobe (AL) and gnathal ganglion (GNG) (at protein level). Expression in AL detected in all animals and expression in GNG, CA and CC detected in some animals (at protein level).

It is found in the secreted. Its function is as follows. Neuropeptide stimulator of juvenile hormone synthesis. This is Allatotropins from Agrotis ipsilon (Black cutworm moth).